The chain runs to 324 residues: N-acetyl-gamma-glutamyl-phosphate reductase (324 aa).

Residue Cys131 is part of the active site.

Belongs to the NAGSA dehydrogenase family. Type 1 subfamily.

The protein resides in the cytoplasm. The enzyme catalyses N-acetyl-L-glutamate 5-semialdehyde + phosphate + NADP(+) = N-acetyl-L-glutamyl 5-phosphate + NADPH + H(+). Its pathway is amino-acid biosynthesis; L-arginine biosynthesis; N(2)-acetyl-L-ornithine from L-glutamate: step 3/4. In terms of biological role, catalyzes the NADPH-dependent reduction of N-acetyl-5-glutamyl phosphate to yield N-acetyl-L-glutamate 5-semialdehyde. The polypeptide is N-acetyl-gamma-glutamyl-phosphate reductase (Bradyrhizobium sp. (strain ORS 278)).